The chain runs to 443 residues: Protein king tubby (443 aa).

Disordered regions lie at residues 57–80 (TNGS…NNMR) and 98–191 (HELE…EGDV). The span at 67 to 80 (VAMNTSRNHSNNMR) shows a compositional bias: polar residues. Over residues 113–128 (QQQQSASHSANSTQSQ) the composition is skewed to low complexity. Phosphoserine is present on Ser-136. Over residues 177 to 186 (NGTGNGTGGE) the composition is skewed to gly residues.

This sequence belongs to the TUB family.

The protein localises to the cytoplasm. It is found in the nucleus. Its subcellular location is the cell projection. The protein resides in the cilium membrane. It localises to the rhabdomere. The protein is Protein king tubby of Drosophila sechellia (Fruit fly).